The following is a 453-amino-acid chain: Bifunctional protein GlmU (453 aa).

Positions 1–231 are pyrophosphorylase; sequence MERTCLAIIL…EVEMTGCNNR (231 aa). Residues 10 to 13, lysine 24, glutamine 77, 82 to 83, 105 to 107, glycine 143, glutamate 157, asparagine 172, and asparagine 229 each bind UDP-N-acetyl-alpha-D-glucosamine; these read LAAG, GT, and YGD. Mg(2+) is bound at residue aspartate 107. Asparagine 229 is a Mg(2+) binding site. The interval 232-252 is linker; that stretch reads AELAFIERLWQERRRHELMLS. The N-acetyltransferase stretch occupies residues 253–453; the sequence is GVTMIAPETV…AIKAAKKGSH (201 aa). Arginine 318 and lysine 336 together coordinate UDP-N-acetyl-alpha-D-glucosamine. Histidine 348 acts as the Proton acceptor in catalysis. Positions 351 and 362 each coordinate UDP-N-acetyl-alpha-D-glucosamine. Acetyl-CoA-binding positions include alanine 365, 371–372, serine 390, serine 408, and arginine 425; that span reads NY.

It in the N-terminal section; belongs to the N-acetylglucosamine-1-phosphate uridyltransferase family. This sequence in the C-terminal section; belongs to the transferase hexapeptide repeat family. As to quaternary structure, homotrimer. The cofactor is Mg(2+).

It is found in the cytoplasm. The enzyme catalyses alpha-D-glucosamine 1-phosphate + acetyl-CoA = N-acetyl-alpha-D-glucosamine 1-phosphate + CoA + H(+). It carries out the reaction N-acetyl-alpha-D-glucosamine 1-phosphate + UTP + H(+) = UDP-N-acetyl-alpha-D-glucosamine + diphosphate. Its pathway is nucleotide-sugar biosynthesis; UDP-N-acetyl-alpha-D-glucosamine biosynthesis; N-acetyl-alpha-D-glucosamine 1-phosphate from alpha-D-glucosamine 6-phosphate (route II): step 2/2. The protein operates within nucleotide-sugar biosynthesis; UDP-N-acetyl-alpha-D-glucosamine biosynthesis; UDP-N-acetyl-alpha-D-glucosamine from N-acetyl-alpha-D-glucosamine 1-phosphate: step 1/1. It functions in the pathway bacterial outer membrane biogenesis; LPS lipid A biosynthesis. Functionally, catalyzes the last two sequential reactions in the de novo biosynthetic pathway for UDP-N-acetylglucosamine (UDP-GlcNAc). The C-terminal domain catalyzes the transfer of acetyl group from acetyl coenzyme A to glucosamine-1-phosphate (GlcN-1-P) to produce N-acetylglucosamine-1-phosphate (GlcNAc-1-P), which is converted into UDP-GlcNAc by the transfer of uridine 5-monophosphate (from uridine 5-triphosphate), a reaction catalyzed by the N-terminal domain. The polypeptide is Bifunctional protein GlmU (Rhizobium rhizogenes (strain K84 / ATCC BAA-868) (Agrobacterium radiobacter)).